A 604-amino-acid polypeptide reads, in one-letter code: Arginine--tRNA ligase (604 aa).

The 'HIGH' region motif lies at 142 to 152 (PNIAKEMHVGH).

The protein belongs to the class-I aminoacyl-tRNA synthetase family. Monomer.

It localises to the cytoplasm. It catalyses the reaction tRNA(Arg) + L-arginine + ATP = L-arginyl-tRNA(Arg) + AMP + diphosphate. This chain is Arginine--tRNA ligase, found in Prochlorococcus marinus (strain MIT 9312).